Here is a 472-residue protein sequence, read N- to C-terminus: Chitobiosyldiphosphodolichol beta-mannosyltransferase (472 aa).

The Lumenal segment spans residues Met1 to Gly20. The chain crosses the membrane as a helical span at residues Pro21–Leu41. Residues Pro42–Asn118 are Cytoplasmic-facing. Residues Leu119–Leu139 constitute an intramembrane region (helical). Residues Leu140–Asp472 lie on the Cytoplasmic side of the membrane.

The protein belongs to the glycosyltransferase group 1 family.

The protein localises to the endoplasmic reticulum membrane. It carries out the reaction an N,N'-diacetylchitobiosyl-diphospho-di-trans,poly-cis-dolichol + GDP-alpha-D-mannose = a beta-D-Man-(1-&gt;4)-beta-D-GlcNAc-(1-&gt;4)-alpha-D-GlcNAc-diphospho-di-trans,poly-cis-dolichol + GDP + H(+). Its pathway is protein modification; protein glycosylation. Its function is as follows. Participates in the formation of the lipid-linked precursor oligosaccharide for N-glycosylation. Involved in assembling the dolichol-pyrophosphate-GlcNAc(2)-Man(5) intermediate on the cytoplasmic surface of the ER. The sequence is that of Chitobiosyldiphosphodolichol beta-mannosyltransferase (ALG1) from Debaryomyces hansenii (strain ATCC 36239 / CBS 767 / BCRC 21394 / JCM 1990 / NBRC 0083 / IGC 2968) (Yeast).